A 1071-amino-acid polypeptide reads, in one-letter code: ATP-dependent helicase/deoxyribonuclease subunit B (1071 aa).

This sequence belongs to the helicase family. AddB/RexB type 2 subfamily. In terms of assembly, heterodimer of AddA and RexB. Mg(2+) serves as cofactor.

In terms of biological role, the heterodimer acts as both an ATP-dependent DNA helicase and an ATP-dependent, dual-direction single-stranded exonuclease. Recognizes the chi site generating a DNA molecule suitable for the initiation of homologous recombination. This subunit has 5' -&gt; 3' nuclease activity but not helicase activity. This chain is ATP-dependent helicase/deoxyribonuclease subunit B, found in Streptococcus pyogenes serotype M1.